The chain runs to 301 residues: Homoserine O-acetyltransferase (301 aa).

Catalysis depends on Cys142, which acts as the Acyl-thioester intermediate. The substrate site is built by Lys163 and Ser192. The active-site Proton acceptor is the His235. Residue Glu237 is part of the active site. Residue Arg249 participates in substrate binding.

The protein belongs to the MetA family.

Its subcellular location is the cytoplasm. The enzyme catalyses L-homoserine + acetyl-CoA = O-acetyl-L-homoserine + CoA. Its pathway is amino-acid biosynthesis; L-methionine biosynthesis via de novo pathway; O-acetyl-L-homoserine from L-homoserine: step 1/1. Functionally, transfers an acetyl group from acetyl-CoA to L-homoserine, forming acetyl-L-homoserine. The polypeptide is Homoserine O-acetyltransferase (Bacillus cereus (strain 03BB102)).